A 165-amino-acid polypeptide reads, in one-letter code: 3-isopropylmalate dehydratase small subunit 2 (165 aa).

The protein belongs to the LeuD family. LeuD type 2 subfamily. Heterodimer of LeuC and LeuD.

The catalysed reaction is (2R,3S)-3-isopropylmalate = (2S)-2-isopropylmalate. It functions in the pathway amino-acid biosynthesis; L-leucine biosynthesis; L-leucine from 3-methyl-2-oxobutanoate: step 2/4. Functionally, catalyzes the isomerization between 2-isopropylmalate and 3-isopropylmalate, via the formation of 2-isopropylmaleate. The polypeptide is 3-isopropylmalate dehydratase small subunit 2 (leuD2) (Archaeoglobus fulgidus (strain ATCC 49558 / DSM 4304 / JCM 9628 / NBRC 100126 / VC-16)).